A 158-amino-acid chain; its full sequence is Oocyte-secreted protein 2 (158 aa).

A signal peptide spans 1-17; that stretch reads MALEVLMLLAVLIWTGA.

Belongs to the PLAC1 family. In terms of tissue distribution, highly expressed in oocytes.

It is found in the secreted. Its subcellular location is the cytoplasm. Involved in oocyte maturation. The protein is Oocyte-secreted protein 2 (OOSP2) of Homo sapiens (Human).